The primary structure comprises 310 residues: Olfactory receptor 5P52 (310 aa).

Over 1–25 (MEAENHTTVAELIILGLTEDPKLCI) the chain is Extracellular. Asn5 carries N-linked (GlcNAc...) asparagine glycosylation. A helical transmembrane segment spans residues 26–46 (VFFVIFLGVYIITLVGNISII). Residues 47 to 54 (TLIRISSQ) lie on the Cytoplasmic side of the membrane. Residues 55 to 75 (LHTPMYLFLSHLAFVDIVFST) form a helical membrane-spanning segment. Residues 76 to 99 (SVSVIMLMELLGHGLVLSVATCAA) are Extracellular-facing. Cys97 and Cys189 are joined by a disulfide. The chain crosses the membrane as a helical span at residues 100–120 (QLCMTVSFGSAECFLLAAMAY). Residues 121-133 (DRYVAICSPLLYS) are Cytoplasmic-facing. The helical transmembrane segment at 134–154 (TLMSSRVCFLLLGISYVGGFV) threads the bilayer. Residues 155–196 (NGWTFTGCVLSLSFCGPTQINHFFCDFSPLLKVSCSDVSIIG) are Extracellular-facing. A helical membrane pass occupies residues 197–217 (IIPSISSGSIIVVTVFVIAVS). The Cytoplasmic segment spans residues 218-237 (YIYILITILKMRSTEGRHKA). A helical membrane pass occupies residues 238–258 (FSTCTSHLTAVTLFYGTITVI). Residues 259–271 (YVMPKSSYSTEQN) are Extracellular-facing. Residues 272-292 (KVISLFYTVVIPMLNPLIYSL) traverse the membrane as a helical segment. Residues 293–310 (RNRDVKDALRKAIVRVYS) are Cytoplasmic-facing.

The protein belongs to the G-protein coupled receptor 1 family.

Its subcellular location is the cell membrane. In terms of biological role, potential odorant receptor. The protein is Olfactory receptor 5P52 of Mus musculus (Mouse).